The sequence spans 125 residues: UPF0738 protein GTNG_0708 (125 aa).

The protein belongs to the UPF0738 family.

In Geobacillus thermodenitrificans (strain NG80-2), this protein is UPF0738 protein GTNG_0708.